The primary structure comprises 224 residues: UPF0173 metal-dependent hydrolase Ta0764 (224 aa).

It belongs to the UPF0173 family.

The polypeptide is UPF0173 metal-dependent hydrolase Ta0764 (Thermoplasma acidophilum (strain ATCC 25905 / DSM 1728 / JCM 9062 / NBRC 15155 / AMRC-C165)).